Consider the following 118-residue polypeptide: 5-hydroxyisourate hydrolase (118 aa).

Substrate is bound by residues histidine 11, arginine 51, and tyrosine 115.

Belongs to the transthyretin family. 5-hydroxyisourate hydrolase subfamily. Homotetramer.

It is found in the peroxisome. The catalysed reaction is 5-hydroxyisourate + H2O = 5-hydroxy-2-oxo-4-ureido-2,5-dihydro-1H-imidazole-5-carboxylate + H(+). Its pathway is purine metabolism; urate degradation; (S)-allantoin from urate: step 2/3. Its function is as follows. Catalyzes the hydrolysis of 5-hydroxyisourate (HIU) to 2-oxo-4-hydroxy-4-carboxy-5-ureidoimidazoline (OHCU). In Mus musculus (Mouse), this protein is 5-hydroxyisourate hydrolase (Urah).